The primary structure comprises 672 residues: MRTALLEVGLEELPASEFHSILKQLEEKSAELLKAYRVSSGSVEVFVGSRRFGVILKNLPERQEDFTEEKKGPPLNVAYDENGKPTRALEGFLRNNNASLENVVHREGYVYLSRVVEGKPVEEVLPDLFRDLVLGLNFRKPMRWGSGEHEYIRPVHWIVAMVDGRVLDLEIFGLRSSRISYGKRYHAGSIEIPDSERYYESLKKGFVISSHLERKKFVLEQIDEFEKRSSMKIERDEELIEEIVAITEYPRIVVGQFDRKYLELPEEIIVTAVKHHQRSFIAHKGTLTNTFVAFQDGPQPPENVVKGYERVINARLEDARYYFQKDLETPLEKMNEKLKEIVFQEKLGTLYDKVERIKKISQRLCEDLKLPGSFTQKVLEAASICKADIASKVVYEFPELQGVMGRIYALREGINEEIATAIEDHYSEEPQTVIGSILGIADRIDTIVGNFAIGNVPTSSKDPYGLKSKADTIFRIIRKNEWDISLEELLTFASSLVGYRLSEELETFFAGRFYQFLINELGISFDVARAVNHLWKKPLRGILSAEALQEISEKPEFQDLFVGFERVHNITKNHDSTKFDGALFEKEEEKKLMNKFYEVKEKVLKALERLNYREALQYLIELKPYIDEYFDNVFVMVKRDDLRVNRLSFLKNIDELFMMVGDMTYLVKRSQV.

The protein belongs to the class-II aminoacyl-tRNA synthetase family. As to quaternary structure, tetramer of two alpha and two beta subunits.

The protein resides in the cytoplasm. It catalyses the reaction tRNA(Gly) + glycine + ATP = glycyl-tRNA(Gly) + AMP + diphosphate. In Thermotoga maritima (strain ATCC 43589 / DSM 3109 / JCM 10099 / NBRC 100826 / MSB8), this protein is Glycine--tRNA ligase beta subunit (glyS).